The sequence spans 357 residues: DnaJ homolog subfamily C member 25 (357 aa).

The chain crosses the membrane as a helical span at residues 19-39; sequence WLLLAPLLLVPLLVRPAEALV. The 74-residue stretch at 48-121 folds into the J domain; that stretch reads DCYEVLGVSR…ETRKDYDYML (74 aa). 2 consecutive transmembrane segments (helical) span residues 147-167 and 241-261; these read VVIL…WWNS and LLLF…AWYC.

Belongs to the DNAJC25 family.

It localises to the membrane. In Rattus norvegicus (Rat), this protein is DnaJ homolog subfamily C member 25 (Dnajc25).